Here is an 83-residue protein sequence, read N- to C-terminus: Late seed maturation protein P8B6 (83 aa).

2 stretches are compositionally biased toward basic and acidic residues: residues 1–18 (MASQ…KKGE) and 37–51 (AEGR…KEQL). The tract at residues 1–83 (MASQQEKKQL…DAEDEPSTRT (83 aa)) is disordered. Positions 73-83 (EDAEDEPSTRT) are enriched in acidic residues.

The protein belongs to the small hydrophilic plant seed protein family.

It localises to the cytoplasm. This protein may play a role in equipping the seed for survival, maintaining a minimal level of hydration in the dry organism and preventing the denaturation of cytoplasmic components, or may play a role during imbibition by controlling water uptake. The sequence is that of Late seed maturation protein P8B6 from Raphanus sativus (Radish).